Here is a 347-residue protein sequence, read N- to C-terminus: 4-hydroxy-2-oxovalerate aldolase 2 (347 aa).

The region spanning 7–259 (VRITDTSLRD…KTGIDFFDIA (253 aa)) is the Pyruvate carboxyltransferase domain. Residue 15–16 (RD) participates in substrate binding. D16 serves as a coordination point for Mn(2+). The active-site Proton acceptor is the H19. Positions 169 and 198 each coordinate substrate. Mn(2+) contacts are provided by H198 and H200. Y289 provides a ligand contact to substrate.

Belongs to the 4-hydroxy-2-oxovalerate aldolase family.

It catalyses the reaction (S)-4-hydroxy-2-oxopentanoate = acetaldehyde + pyruvate. The sequence is that of 4-hydroxy-2-oxovalerate aldolase 2 from Mycobacterium marinum (strain ATCC BAA-535 / M).